Reading from the N-terminus, the 153-residue chain is Ribosome maturation factor RimP (153 aa).

The protein belongs to the RimP family.

The protein resides in the cytoplasm. Functionally, required for maturation of 30S ribosomal subunits. This is Ribosome maturation factor RimP from Rippkaea orientalis (strain PCC 8801 / RF-1) (Cyanothece sp. (strain PCC 8801)).